A 322-amino-acid polypeptide reads, in one-letter code: Ribosomal RNA small subunit methyltransferase H (322 aa).

S-adenosyl-L-methionine contacts are provided by residues 34 to 36, Asp-59, Phe-86, Asp-112, and Gln-119; that span reads GGH.

The protein belongs to the methyltransferase superfamily. RsmH family.

It is found in the cytoplasm. It carries out the reaction cytidine(1402) in 16S rRNA + S-adenosyl-L-methionine = N(4)-methylcytidine(1402) in 16S rRNA + S-adenosyl-L-homocysteine + H(+). Specifically methylates the N4 position of cytidine in position 1402 (C1402) of 16S rRNA. This is Ribosomal RNA small subunit methyltransferase H from Chlorobium limicola (strain DSM 245 / NBRC 103803 / 6330).